The following is a 151-amino-acid chain: HTH-type transcriptional regulator FL11 (151 aa).

An HTH asnC-type domain is found at 5-66 (LDEIDRRIIK…IVNPEALGYS (62 aa)). A DNA-binding region (H-T-H motif) is located at residues 24 to 43 (LREISKITGLAESTIHERIK). 98-104 (ETTGDYD) contributes to the L-arginine binding site. L-lysine-binding positions include asparagine 118, aspartate 122, and 133–135 (THT). L-arginine is bound by residues aspartate 122 and 133–135 (THT).

In terms of assembly, homodimer. Binds DNA as a dimer and an octamer.

With respect to regulation, in the famine mode, FL11 forms dimers and acts as a repressor, leading to growth arrest. In the feast mode, in the presence of high concentrations of lysine or arginine, four dimers assemble into an octamer and cover the fl11 and lysine biosynthesis promoters. This leads to the inhibition of fl11 expression and lysine biosynthesis, decrease of the FL11 concentration in the cell, derepression of the target genes and activation of the metabolism. DNA-binding protein involved in the repression of transcription of a large number of genes, thereby arresting growth, in response to environmental changes. The protein is HTH-type transcriptional regulator FL11 of Pyrococcus abyssi (strain GE5 / Orsay).